The primary structure comprises 1244 residues: Mitotic chromosome and X-chromosome-associated protein mix-1 (1244 aa).

32 to 39 is a binding site for ATP; sequence GYNGSGKS. A coiled-coil region spans residues 247-355; sequence VKKSAKEIED…AKRKEHEDSK (109 aa). A compositionally biased stretch (basic and acidic residues) spans 337–355; sequence LSKDREVLDAKRKEHEDSK. A disordered region spans residues 337–369; it reads LSKDREVLDAKRKEHEDSKAANSKDIQSQSDDE. Positions 356–365 are enriched in polar residues; it reads AANSKDIQSQ. A coiled-coil region spans residues 415–472; the sequence is ITAAKKRGERLHNQIKHLEGEKATLSARSKSDIGSADNYQKEVDEINKQLQLLGFNID. The SMC hinge domain occupies 526-654; sequence DVFGYVAHLI…DSLDVAREIA (129 aa). Coiled coils occupy residues 701–946 and 975–1037; these read PQIE…RKEA and YTVS…IATL. Positions 919 to 932 are enriched in basic and acidic residues; that stretch reads AKTKSKREEKEKEL. A disordered region spans residues 919-943; it reads AKTKSKREEKEKELTSLQQSEASNR. The span at 1216–1232 shows a compositional bias: basic and acidic residues; sequence DAAAKKGAQKNDKEPPK. A disordered region spans residues 1216 to 1244; it reads DAAAKKGAQKNDKEPPKKKPIVVDDDDFE.

The protein belongs to the SMC family. SMC2 subfamily. In terms of assembly, component of the condensin I complex, which contains the mix-1/SMC2 and smc-4/SMC4 heterodimer, and three non SMC subunits that probably regulate the complex: dpy-26, capg-1 and dpy-28. Within the complex, interacts with smc-4, dpy-26, dpy-28 and capg-1. Interaction with smc-4 is required for mitotic chromosome localization. Component of the condensin II complex, which contains the mix-1/SMC2 and smc-4/SMC4 heterodimer, and three non SMC subunits, capg-2, kle-2 and hcp-6 that probably regulate the complex. Within the complex, interacts with smc-4, capg-2, kle-2 and hcp-6. Also a component of the condensin-like dosage compensation complex, which contains the mix-1/SMC2 and dpy-27/SMC4 heterodimer, and three non SMC subunits that probably regulate the complex: dpy-26, capg-1 and dpy-28. Within the complex, interacts with dpy-27, dpy-26, capg-1 and dpy-28. Requires capg-1 for hermaphrodite X chromosome localization. Interacts with smcl-1. As to expression, expressed in embryos and in adult somatic and germline tissues (at protein level).

It is found in the nucleus. Its subcellular location is the chromosome. Essential protein required for both chromosome condensation and segregation and X-chromosome dosage compensation depending on its binding partners. Central component of the condensin I complex, a complex required for conversion of interphase chromatin into mitotic-like condense chromosomes. The condensin complex introduces positive supercoils into relaxed DNA in the presence of type I topoisomerases. Converts nicked DNA into positive knotted forms in the presence of type II topoisomerases. Central component of the condensin II complex, a complex that seems to play a role in prophase chromosome condensation and organization. Both the condensin complex I and II play a role in meiotic and mitotic chromosome segregation. Plays a role in robust cytokinesis upon the presence of chromatin obstructions. Also a member of the condensin I-like dosage compensation complex that associates specifically with hermaphrodite X chromosomes to reduce their gene transcription during interphase. This is Mitotic chromosome and X-chromosome-associated protein mix-1 (mix-1) from Caenorhabditis elegans.